The primary structure comprises 208 residues: N-(5'-phosphoribosyl)anthranilate isomerase (208 aa).

The protein belongs to the TrpF family.

It carries out the reaction N-(5-phospho-beta-D-ribosyl)anthranilate = 1-(2-carboxyphenylamino)-1-deoxy-D-ribulose 5-phosphate. Its pathway is amino-acid biosynthesis; L-tryptophan biosynthesis; L-tryptophan from chorismate: step 3/5. This Methanococcus maripaludis (strain C7 / ATCC BAA-1331) protein is N-(5'-phosphoribosyl)anthranilate isomerase.